Consider the following 89-residue polypeptide: Small ribosomal subunit protein bS20 (89 aa).

Residues 1–12 show a composition bias toward basic residues; that stretch reads MANIKSAKKRAK. The interval 1–22 is disordered; that stretch reads MANIKSAKKRAKQTIVRNERNT.

It belongs to the bacterial ribosomal protein bS20 family.

Functionally, binds directly to 16S ribosomal RNA. The protein is Small ribosomal subunit protein bS20 of Xanthomonas oryzae pv. oryzae (strain KACC10331 / KXO85).